A 333-amino-acid polypeptide reads, in one-letter code: Mitochondrial 2-oxoglutarate/malate carrier protein (333 aa).

3 Solcar repeats span residues 29–127 (FRLI…LFER), 136–227 (PGFL…SKQF), and 236–325 (DNIL…MNKA). 6 helical membrane passes run 30 to 61 (RLIA…VQPL), 102 to 120 (GLSA…RLGI), 138 to 159 (FLLK…GTPA), 202 to 221 (GCIP…LASY), 241 to 259 (HFCA…SMPV), and 300 to 319 (GFTP…FIFL).

This sequence belongs to the mitochondrial carrier (TC 2.A.29) family. In terms of assembly, interacts with SMIM26.

It localises to the membrane. It carries out the reaction (S)-malate(in) + 2-oxoglutarate(out) = (S)-malate(out) + 2-oxoglutarate(in). The catalysed reaction is malonate(in) + 2-oxoglutarate(out) = malonate(out) + 2-oxoglutarate(in). The enzyme catalyses succinate(in) + 2-oxoglutarate(out) = succinate(out) + 2-oxoglutarate(in). It catalyses the reaction maleate(in) + 2-oxoglutarate(out) = maleate(out) + 2-oxoglutarate(in). It carries out the reaction oxaloacetate(in) + 2-oxoglutarate(out) = oxaloacetate(out) + 2-oxoglutarate(in). In terms of biological role, catalyzes the transport of 2-oxoglutarate (alpha-oxoglutarate) across the inner mitochondrial membrane in an electroneutral exchange for malate. Can also exchange 2-oxoglutarate for other dicarboxylic acids such as malonate, succinate, maleate and oxaloacetate, although with lower affinity. Contributes to several metabolic processes, including the malate-aspartate shuttle, the oxoglutarate/isocitrate shuttle, in gluconeogenesis from lactate, and in nitrogen metabolism. Maintains mitochondrial fusion and fission events, and the organization and morphology of cristae. Involved in the regulation of apoptosis. Helps protect from cytotoxic-induced apoptosis by modulating glutathione levels in mitochondria. In Sus scrofa (Pig), this protein is Mitochondrial 2-oxoglutarate/malate carrier protein (SLC25A11).